The chain runs to 719 residues: Polyribonucleotide nucleotidyltransferase (719 aa).

Positions 490 and 496 each coordinate Mg(2+). In terms of domain architecture, KH spans 557 to 619 (PKIEIIIIPK…KSIDAALTRI (63 aa)). Positions 629 to 699 (GEIYEGKIRS…KTGKFKLSHK (71 aa)) constitute an S1 motif domain.

It belongs to the polyribonucleotide nucleotidyltransferase family. Mg(2+) is required as a cofactor.

It localises to the cytoplasm. It catalyses the reaction RNA(n+1) + phosphate = RNA(n) + a ribonucleoside 5'-diphosphate. In terms of biological role, involved in mRNA degradation. Catalyzes the phosphorolysis of single-stranded polyribonucleotides processively in the 3'- to 5'-direction. The sequence is that of Polyribonucleotide nucleotidyltransferase from Azobacteroides pseudotrichonymphae genomovar. CFP2.